A 214-amino-acid polypeptide reads, in one-letter code: uncharacterized protein (214 aa).

The first 24 residues, 1–24 (MVTPHGILLLTITAAASLLWITFA), serve as a signal peptide directing secretion. Positions 99 to 121 (APNDTQEQNSTRNKRDSESYTAT) are disordered. Positions 100-109 (PNDTQEQNST) are enriched in polar residues.

In terms of tissue distribution, component of the acid-insoluble and acid-soluble organic matrix of the aragonitic skeleton (at protein level).

The protein resides in the secreted. This is an uncharacterized protein from Acropora millepora (Staghorn coral).